The following is a 102-amino-acid chain: Small ribosomal subunit protein uS10 (102 aa).

It belongs to the universal ribosomal protein uS10 family. In terms of assembly, part of the 30S ribosomal subunit.

Involved in the binding of tRNA to the ribosomes. This chain is Small ribosomal subunit protein uS10, found in Mycoplasma mobile (strain ATCC 43663 / 163K / NCTC 11711) (Mesomycoplasma mobile).